The sequence spans 251 residues: MDHAIYTAMGAASQTLNQQAVTASNLANASTPGFRAQLNALRAVPVEGLSLPTRTLVTASTPGADMTPGKMDYTSRPLDVALQQDGWLAVQTADGSEGYTRNGSIQVDPTGQLTIQGHPVIGEAGPIAVPEGAEITIAADGTISALNPGDPANTVAPVGRLKLVKATGSEVQRGDDGIFRLSAETQATRGPVLQADPTLRVMSGVLEGSNVNAVAAMSDMIASARRFEMQMKVISSVDDNAGRANQLLSMS.

It belongs to the flagella basal body rod proteins family. The basal body constitutes a major portion of the flagellar organelle and consists of five rings (E,L,P,S, and M) mounted on a central rod. The rod consists of about 26 subunits of FlgG in the distal portion, and FlgB, FlgC and FlgF are thought to build up the proximal portion of the rod with about 6 subunits each.

Its subcellular location is the bacterial flagellum basal body. The chain is Flagellar basal-body rod protein FlgF (flgF) from Escherichia coli (strain K12).